Consider the following 848-residue polypeptide: Translation initiation factor IF-2 (848 aa).

Residues 1-10 (MSENNNDKIT) are compositionally biased toward basic and acidic residues. Disordered regions lie at residues 1–79 (MSEN…EKPV) and 121–163 (AERQ…LFSS). Residues 17 to 33 (LKRSGSETNTVKQNFNH) show a composition bias toward polar residues. Residues 121–138 (AERQAAEKQAKESEEGLH) show a composition bias toward basic and acidic residues. Residues 149 to 163 (KSSSNTTKPTPLFSS) are compositionally biased toward polar residues. A tr-type G domain is found at 346 to 513 (TRPPIVTIMG…AILLQAEILD (168 aa)). The interval 355–362 (GHVDHGKT) is G1. 355–362 (GHVDHGKT) is a binding site for GTP. The G2 stretch occupies residues 380–384 (GITQH). Residues 401–404 (DTPG) are G3. Residues 401 to 405 (DTPGH) and 455 to 458 (NKID) contribute to the GTP site. Positions 455–458 (NKID) are G4. The G5 stretch occupies residues 491–493 (SAK).

It belongs to the TRAFAC class translation factor GTPase superfamily. Classic translation factor GTPase family. IF-2 subfamily.

The protein resides in the cytoplasm. In terms of biological role, one of the essential components for the initiation of protein synthesis. Protects formylmethionyl-tRNA from spontaneous hydrolysis and promotes its binding to the 30S ribosomal subunits. Also involved in the hydrolysis of GTP during the formation of the 70S ribosomal complex. This chain is Translation initiation factor IF-2, found in Bartonella bacilliformis (strain ATCC 35685 / KC583 / Herrer 020/F12,63).